Consider the following 212-residue polypeptide: Probable GTP-binding protein EngB (212 aa).

The region spanning 27-201 (GGIEIAFAGR…TRILSDWYQP (175 aa)) is the EngB-type G domain. Residues 35–42 (GRSNAGKS), 62–66 (GRTQL), 80–83 (DLPG), 147–150 (TKAD), and 180–182 (FSS) each bind GTP. Residues serine 42 and threonine 64 each contribute to the Mg(2+) site.

It belongs to the TRAFAC class TrmE-Era-EngA-EngB-Septin-like GTPase superfamily. EngB GTPase family. Mg(2+) serves as cofactor.

Its function is as follows. Necessary for normal cell division and for the maintenance of normal septation. The chain is Probable GTP-binding protein EngB from Tolumonas auensis (strain DSM 9187 / NBRC 110442 / TA 4).